The primary structure comprises 312 residues: Cathepsin O (312 aa).

Residues 1–23 (MKPQLVNLLLLCCCCLGRHGVAG) form the signal peptide. Positions 24 to 98 (TWSWSHQREA…EGQRPIPNVS (75 aa)) are cleaved as a propeptide — activation peptide. Residues Asn-53 and Asn-96 are each glycosylated (N-linked (GlcNAc...) asparagine). 3 cysteine pairs are disulfide-bonded: Cys-120–Cys-161, Cys-154–Cys-195, and Cys-253–Cys-301. The active site involves Cys-123. Residues His-260 and Asn-280 contribute to the active site.

This sequence belongs to the peptidase C1 family.

It localises to the lysosome. The enzyme catalyses The recombinant human enzyme hydrolyzes synthetic endopeptidase substrates including Z-Phe-Arg-NHMec and Z-Arg-Arg-NHMec.. Functionally, proteolytic enzyme possibly involved in normal cellular protein degradation and turnover. This chain is Cathepsin O (Ctso), found in Mus musculus (Mouse).